The following is a 338-amino-acid chain: 2-oxoglutarate-dependent dioxygenase ecdG (338 aa).

Residues 165–273 (PSVTNLGFLR…KYTLAYFVRP (109 aa)) enclose the Fe2OG dioxygenase domain. Residues H190, D192, and H249 each contribute to the Fe cation site. K264 contacts 2-oxoglutarate.

The protein belongs to the iron/ascorbate-dependent oxidoreductase family. It depends on Fe(2+) as a cofactor.

The protein operates within antifungal biosynthesis. Functionally, 2-oxoglutarate-dependent dioxygenase; part of the gene cluster that mediates the biosynthesis of echinocandin B, a fungal lipidated cyclic hexapeptide that acts as an antifungal agent. Linoleoyl-AMP, produced by the fatty-acyl-AMP ligase ecdI, is transferred to the initiation carrier domain (T0) of ecdA. The linoleoyl-S-phosphopantetheinyl-T0 is sequentially extended with L-ornithine, L-threonine, L-proline, L-homotyrosine, L-threonine, and 4R-methyl-L-proline to form the linear hexapeptide. Thereafter, the terminal condensation (C7) performs macrocyclization of the NRPS product and the cyclic scaffold is released from ecdA. All six of the amino acid residues are hydroxylated, including 4R,5R-dihydroxy-L-ornithine, 4R-hydroxyl-L-proline, 3S,4S-dihydroxy-L-homotyrosine, and 3S-hydroxyl-4S-methyl-L-prolin. In the pathway, all the hydroxylation reactions are proposed to occur following completion of the cyclic peptide, so the unhydroxylated precursor produced by ecdA will undergo six rounds of hydroxylation. Five hydroxylase genes (ecdG, ecdH, ecdK, htyE and htyF) are embedded within the echinocandin B (ecd) and L-homotyrosine (hty) clusters. The protein is 2-oxoglutarate-dependent dioxygenase ecdG of Aspergillus rugulosus (Emericella rugulosa).